A 36-amino-acid polypeptide reads, in one-letter code: Photosystem I reaction center subunit VIII (36 aa).

The helical transmembrane segment at 7–29 threads the bilayer; that stretch reads PSIFVPLVGLVFPAITMASLFIY.

It belongs to the PsaI family.

The protein resides in the plastid. Its subcellular location is the chloroplast thylakoid membrane. Functionally, may help in the organization of the PsaL subunit. In Psilotum nudum (Whisk fern), this protein is Photosystem I reaction center subunit VIII.